The chain runs to 87 residues: Small ribosomal subunit protein uS19 (87 aa).

It belongs to the universal ribosomal protein uS19 family.

In terms of biological role, protein S19 forms a complex with S13 that binds strongly to the 16S ribosomal RNA. The polypeptide is Small ribosomal subunit protein uS19 (Mesoplasma florum (strain ATCC 33453 / NBRC 100688 / NCTC 11704 / L1) (Acholeplasma florum)).